A 146-amino-acid chain; its full sequence is uncharacterized protein (146 aa).

An N-terminal signal peptide occupies residues 1–26 (MQFRPSIALVLSIVGILSLEISWTDG).

Prismatic layer of shell (at protein level). Expressed primarily in the mantle with highest level in the mantle edge and lower level in the mantle pallium.

It is found in the secreted. This is an uncharacterized protein from Margaritifera margaritifera (Freshwater pearl mussel).